The primary structure comprises 578 residues: L-ascorbate oxidase (578 aa).

Positions 1-28 are cleaved as a signal peptide; sequence MASLGFLFFFLLPLILLELSSSRSVMAA. 2 consecutive Plastocyanin-like domains span residues 30 to 149 and 161 to 328; these read TRHF…LIVE and DGEF…NYLP. Cu cation-binding residues include H87, H89, H131, and H133. Cystine bridges form between C108-C565 and C207-C221. N-linked (GlcNAc...) asparagine glycosylation occurs at N206. N-linked (GlcNAc...) asparagine glycans are attached at residues N349, N394, N438, and N451. A Plastocyanin-like 3 domain is found at 372–550; sequence HRRIILLNTQ…HMGMGVIFAE (179 aa). Residues H472, H475, H477, H533, C534, H535, H539, and M544 each coordinate Cu cation.

Belongs to the multicopper oxidase family. As to quaternary structure, dimer. The cofactor is Cu cation. Highly expressed in young and growing tissues.

It is found in the secreted. It carries out the reaction 4 L-ascorbate + O2 = 4 monodehydro-L-ascorbate radical + 2 H2O. May be involved in a redox system involving ascorbic acid. The chain is L-ascorbate oxidase (AAO) from Nicotiana tabacum (Common tobacco).